We begin with the raw amino-acid sequence, 457 residues long: ATP synthase subunit beta (457 aa).

Residue 147–154 (GGAGVGKT) coordinates ATP.

Belongs to the ATPase alpha/beta chains family. F-type ATPases have 2 components, CF(1) - the catalytic core - and CF(0) - the membrane proton channel. CF(1) has five subunits: alpha(3), beta(3), gamma(1), delta(1), epsilon(1). CF(0) has three main subunits: a(1), b(2) and c(9-12). The alpha and beta chains form an alternating ring which encloses part of the gamma chain. CF(1) is attached to CF(0) by a central stalk formed by the gamma and epsilon chains, while a peripheral stalk is formed by the delta and b chains.

The protein localises to the cell inner membrane. The catalysed reaction is ATP + H2O + 4 H(+)(in) = ADP + phosphate + 5 H(+)(out). Its function is as follows. Produces ATP from ADP in the presence of a proton gradient across the membrane. The catalytic sites are hosted primarily by the beta subunits. The polypeptide is ATP synthase subunit beta (Histophilus somni (strain 129Pt) (Haemophilus somnus)).